The primary structure comprises 675 residues: uncharacterized protein (675 aa).

A run of 4 helical transmembrane segments spans residues 2-22 (QHTF…DFFF), 397-417 (LFLL…VFIA), 448-468 (LLVA…LCCY), and 481-501 (IFVY…TYAA). Disordered regions lie at residues 616-635 (YSPN…DIND) and 646-675 (QRMG…ELSD). Acidic residues predominate over residues 665–675 (VFSESDEELSD). Position 669 is a phosphoserine (S669).

It belongs to the 1-acyl-sn-glycerol-3-phosphate acyltransferase family.

It is found in the endoplasmic reticulum membrane. This is an uncharacterized protein from Schizosaccharomyces pombe (strain 972 / ATCC 24843) (Fission yeast).